The primary structure comprises 145 residues: UPF0179 protein MmarC6_0993 (145 aa).

It belongs to the UPF0179 family.

The protein is UPF0179 protein MmarC6_0993 of Methanococcus maripaludis (strain C6 / ATCC BAA-1332).